An 878-amino-acid polypeptide reads, in one-letter code: Aconitate hydratase A (878 aa).

C426, C492, and C495 together coordinate [4Fe-4S] cluster.

Belongs to the aconitase/IPM isomerase family. Monomer. It depends on [4Fe-4S] cluster as a cofactor.

The enzyme catalyses citrate = D-threo-isocitrate. It catalyses the reaction (2S,3R)-3-hydroxybutane-1,2,3-tricarboxylate = 2-methyl-cis-aconitate + H2O. Its pathway is carbohydrate metabolism; tricarboxylic acid cycle; isocitrate from oxaloacetate: step 2/2. It participates in organic acid metabolism; propanoate degradation. Its function is as follows. Involved in the catabolism of short chain fatty acids (SCFA) via the tricarboxylic acid (TCA)(acetyl degradation route) and probably the 2-methylcitrate cycle I (propionate degradation route). Catalyzes the reversible isomerization of citrate to isocitrate via cis-aconitate. Could catalyze the hydration of 2-methyl-cis-aconitate to yield (2R,3S)-2-methylisocitrate. The apo form of AcnA functions as a RNA-binding regulatory protein. In Rickettsia typhi (strain ATCC VR-144 / Wilmington), this protein is Aconitate hydratase A (acnA).